Reading from the N-terminus, the 502-residue chain is Alpha-ketoglutarate-dependent dioxygenase FTO (502 aa).

Residues 32–324 are fe2OG dioxygenase domain; the sequence is TPKDDEFYQQ…SSTHRVAECS (293 aa). Substrate contacts are provided by Arg-96 and Tyr-108. Asn-202 serves as a coordination point for 2-oxoglutarate. Residues 210–221 form a loop L1; predicted to block binding of double-stranded DNA or RNA region; sequence PYLKEEPYFGMG. At Lys-213 the chain carries N6-acetyllysine. Residues His-228 and Asp-230 each contribute to the Fe cation site. 228–231 contacts substrate; sequence HHDE. Tyr-292 contributes to the 2-oxoglutarate binding site. Fe cation is bound at residue His-304. 2-oxoglutarate contacts are provided by residues 313-315, Thr-317, and Arg-319; that span reads RFS.

It belongs to the fto family. Monomer. May also exist as homodimer. Requires Fe(2+) as cofactor. In terms of tissue distribution, ubiquitous. Highly expressed in teeth and weakly in bone.

Its subcellular location is the nucleus. It localises to the nucleus speckle. The protein resides in the cytoplasm. It catalyses the reaction a 5'-end (N(7)-methyl 5'-triphosphoguanosine)-(N(6),2'-O-dimethyladenosine) in mRNA + 2-oxoglutarate + O2 = a 5'-end (N(7)-methyl 5'-triphosphoguanosine)-(2'-O-methyladenosine) in mRNA + formaldehyde + succinate + CO2. The catalysed reaction is an N(6)-methyladenosine in mRNA + 2-oxoglutarate + O2 = an adenosine in mRNA + formaldehyde + succinate + CO2. It carries out the reaction N(6)-methyladenosine in U6 snRNA + 2-oxoglutarate + O2 = adenosine in U6 snRNA + formaldehyde + succinate + CO2. The enzyme catalyses a 5'-end (N(7)-methyl 5'-triphosphoguanosine)-(N(6),2'-O-dimethyladenosine) in U6 snRNA + 2-oxoglutarate + O2 = a 5'-end (N(7)-methyl 5'-triphosphoguanosine)-(2'-O-methyladenosine) in U6 snRNA + formaldehyde + succinate + CO2. It catalyses the reaction an N(1)-methyladenosine in tRNA + 2-oxoglutarate + O2 = an adenosine in tRNA + formaldehyde + succinate + CO2. Activated by ascorbate. Inhibited by N-oxalylglycine, fumarate and succinate. Functionally, RNA demethylase that mediates oxidative demethylation of different RNA species, such as mRNAs, tRNAs and snRNAs, and acts as a regulator of fat mass, adipogenesis and energy homeostasis. Specifically demethylates N(6)-methyladenosine (m6A) RNA, the most prevalent internal modification of messenger RNA (mRNA) in higher eukaryotes. M6A demethylation by FTO affects mRNA expression and stability. Also able to demethylate m6A in U6 small nuclear RNA (snRNA). Mediates demethylation of N(6),2'-O-dimethyladenosine cap (m6A(m)), by demethylating the N(6)-methyladenosine at the second transcribed position of mRNAs and U6 snRNA. Demethylation of m6A(m) in the 5'-cap by FTO affects mRNA stability by promoting susceptibility to decapping. Also acts as a tRNA demethylase by removing N(1)-methyladenine from various tRNAs. Has no activity towards 1-methylguanine. Has no detectable activity towards double-stranded DNA. Also able to repair alkylated DNA and RNA by oxidative demethylation: demethylates single-stranded RNA containing 3-methyluracil, single-stranded DNA containing 3-methylthymine and has low demethylase activity towards single-stranded DNA containing 1-methyladenine or 3-methylcytosine. Ability to repair alkylated DNA and RNA is however unsure in vivo. Involved in the regulation of fat mass, adipogenesis and body weight, thereby contributing to the regulation of body size and body fat accumulation. Involved in the regulation of thermogenesis and the control of adipocyte differentiation into brown or white fat cells. Regulates activity of the dopaminergic midbrain circuitry via its ability to demethylate m6A in mRNAs. This Rattus norvegicus (Rat) protein is Alpha-ketoglutarate-dependent dioxygenase FTO.